The following is a 150-amino-acid chain: Large ribosomal subunit protein bL9 (150 aa).

Belongs to the bacterial ribosomal protein bL9 family.

Its function is as follows. Binds to the 23S rRNA. The protein is Large ribosomal subunit protein bL9 of Albidiferax ferrireducens (strain ATCC BAA-621 / DSM 15236 / T118) (Rhodoferax ferrireducens).